Here is a 160-residue protein sequence, read N- to C-terminus: ATP synthase subunit delta, mitochondrial (160 aa).

A mitochondrion-targeting transit peptide spans 1–22 (MLRSIIGKSASRSLNFVAKRSY).

This sequence belongs to the ATPase epsilon chain family. As to quaternary structure, F-type ATPases have 2 components, CF(1) - the catalytic core - and CF(0) - the membrane proton channel. CF(1) has five subunits: alpha(3), beta(3), gamma(1), delta(1), epsilon(1). CF(0) has three main subunits: a, b and c.

It localises to the mitochondrion. The protein localises to the mitochondrion inner membrane. In terms of biological role, mitochondrial membrane ATP synthase (F(1)F(0) ATP synthase or Complex V) produces ATP from ADP in the presence of a proton gradient across the membrane which is generated by electron transport complexes of the respiratory chain. F-type ATPases consist of two structural domains, F(1) - containing the extramembraneous catalytic core, and F(0) - containing the membrane proton channel, linked together by a central stalk and a peripheral stalk. During catalysis, ATP turnover in the catalytic domain of F(1) is coupled via a rotary mechanism of the central stalk subunits to proton translocation. Part of the complex F(1) domain and of the central stalk which is part of the complex rotary element. Rotation of the central stalk against the surrounding alpha(3)beta(3) subunits leads to hydrolysis of ATP in three separate catalytic sites on the beta subunits. The polypeptide is ATP synthase subunit delta, mitochondrial (ATP16) (Saccharomyces cerevisiae (strain ATCC 204508 / S288c) (Baker's yeast)).